We begin with the raw amino-acid sequence, 144 residues long: Large ribosomal subunit protein uL13 (144 aa).

This sequence belongs to the universal ribosomal protein uL13 family. As to quaternary structure, part of the 50S ribosomal subunit.

Its function is as follows. This protein is one of the early assembly proteins of the 50S ribosomal subunit, although it is not seen to bind rRNA by itself. It is important during the early stages of 50S assembly. In Herpetosiphon aurantiacus (strain ATCC 23779 / DSM 785 / 114-95), this protein is Large ribosomal subunit protein uL13.